Reading from the N-terminus, the 395-residue chain is S-adenosylmethionine synthase (395 aa).

H18 contributes to the ATP binding site. D20 is a binding site for Mg(2+). A K(+)-binding site is contributed by E46. Positions 59 and 103 each coordinate L-methionine. Residues 103–113 (QSVDIAVGVDA) form a flexible loop region. Residues 170-172 (DAK), 235-236 (KF), D244, 250-251 (RK), A267, and K271 contribute to the ATP site. D244 contacts L-methionine. K275 contacts L-methionine.

Belongs to the AdoMet synthase family. As to quaternary structure, homotetramer; dimer of dimers. The cofactor is Mg(2+). K(+) serves as cofactor.

The protein localises to the cytoplasm. The enzyme catalyses L-methionine + ATP + H2O = S-adenosyl-L-methionine + phosphate + diphosphate. Its pathway is amino-acid biosynthesis; S-adenosyl-L-methionine biosynthesis; S-adenosyl-L-methionine from L-methionine: step 1/1. In terms of biological role, catalyzes the formation of S-adenosylmethionine (AdoMet) from methionine and ATP. The overall synthetic reaction is composed of two sequential steps, AdoMet formation and the subsequent tripolyphosphate hydrolysis which occurs prior to release of AdoMet from the enzyme. The protein is S-adenosylmethionine synthase of Acidiphilium cryptum (strain JF-5).